Consider the following 510-residue polypeptide: 2,3-bisphosphoglycerate-independent phosphoglycerate mutase (510 aa).

The Mn(2+) site is built by Asp-14 and Ser-64. Ser-64 serves as the catalytic Phosphoserine intermediate. Residues His-125, 155–156 (RD), Arg-187, Arg-193, 259–262 (RADR), and Lys-332 each bind substrate. Asp-399, His-403, Asp-440, His-441, and His-459 together coordinate Mn(2+).

Belongs to the BPG-independent phosphoglycerate mutase family. As to quaternary structure, monomer. Requires Mn(2+) as cofactor.

The enzyme catalyses (2R)-2-phosphoglycerate = (2R)-3-phosphoglycerate. The protein operates within carbohydrate degradation; glycolysis; pyruvate from D-glyceraldehyde 3-phosphate: step 3/5. Functionally, catalyzes the interconversion of 2-phosphoglycerate and 3-phosphoglycerate. This is 2,3-bisphosphoglycerate-independent phosphoglycerate mutase from Ectopseudomonas mendocina (strain ymp) (Pseudomonas mendocina).